The following is a 338-amino-acid chain: Isopentenyl-diphosphate delta-isomerase (338 aa).

13–14 serves as a coordination point for substrate; it reads RK. Residues 72–74, serine 102, and asparagine 130 contribute to the FMN site; that span reads AMT. Position 102–104 (102–104) interacts with substrate; the sequence is SQR. Residue glutamine 165 coordinates substrate. Glutamate 166 is a binding site for Mg(2+). FMN is bound by residues lysine 197, threonine 227, 274-276, and 295-296; these read GIR and AR.

Belongs to the IPP isomerase type 2 family. In terms of assembly, homooctamer. Dimer of tetramers. It depends on FMN as a cofactor. The cofactor is NADPH. Requires Mg(2+) as cofactor.

The protein resides in the cytoplasm. The enzyme catalyses isopentenyl diphosphate = dimethylallyl diphosphate. Involved in the biosynthesis of isoprenoids. Catalyzes the 1,3-allylic rearrangement of the homoallylic substrate isopentenyl (IPP) to its allylic isomer, dimethylallyl diphosphate (DMAPP). The protein is Isopentenyl-diphosphate delta-isomerase of Deinococcus radiodurans (strain ATCC 13939 / DSM 20539 / JCM 16871 / CCUG 27074 / LMG 4051 / NBRC 15346 / NCIMB 9279 / VKM B-1422 / R1).